Reading from the N-terminus, the 213-residue chain is Large ribosomal subunit protein uL1 (213 aa).

Belongs to the universal ribosomal protein uL1 family. In terms of assembly, part of the 50S ribosomal subunit.

Probably involved in E site tRNA release. Binds directly to 23S rRNA. Its function is as follows. Protein L1 is also a translational repressor protein, it controls the translation of the L1 operon by binding to its mRNA. Thus it also controls transcription of L10 and L12 by translational coupling. Unlike the case in E.coli, where the site is in the untranslated mRNA leader, this site is within the L1 protein's structural gene. The protein is Large ribosomal subunit protein uL1 of Methanococcus vannielii (strain ATCC 35089 / DSM 1224 / JCM 13029 / OCM 148 / SB).